Here is a 198-residue protein sequence, read N- to C-terminus: Na(+)-translocating NADH-quinone reductase subunit E (198 aa).

6 helical membrane passes run 11–31, 35–55, 77–97, 109–129, 140–160, and 176–196; these read AVFV…FLAV, VSTA…SVPA, FLNF…LEMI, LGIF…VSFM, IVYG…LAGI, and LGIT…FSGV.

Belongs to the NqrDE/RnfAE family. As to quaternary structure, composed of six subunits; NqrA, NqrB, NqrC, NqrD, NqrE and NqrF.

The protein resides in the cell inner membrane. The enzyme catalyses a ubiquinone + n Na(+)(in) + NADH + H(+) = a ubiquinol + n Na(+)(out) + NAD(+). NQR complex catalyzes the reduction of ubiquinone-1 to ubiquinol by two successive reactions, coupled with the transport of Na(+) ions from the cytoplasm to the periplasm. NqrA to NqrE are probably involved in the second step, the conversion of ubisemiquinone to ubiquinol. The sequence is that of Na(+)-translocating NADH-quinone reductase subunit E from Yersinia enterocolitica serotype O:8 / biotype 1B (strain NCTC 13174 / 8081).